Reading from the N-terminus, the 557-residue chain is Formate--tetrahydrofolate ligase (557 aa).

67–74 lines the ATP pocket; the sequence is TPAGEGKS.

This sequence belongs to the formate--tetrahydrofolate ligase family.

The enzyme catalyses (6S)-5,6,7,8-tetrahydrofolate + formate + ATP = (6R)-10-formyltetrahydrofolate + ADP + phosphate. Its pathway is one-carbon metabolism; tetrahydrofolate interconversion. This chain is Formate--tetrahydrofolate ligase, found in Lacticaseibacillus paracasei (strain ATCC 334 / BCRC 17002 / CCUG 31169 / CIP 107868 / KCTC 3260 / NRRL B-441) (Lactobacillus paracasei).